Consider the following 246-residue polypeptide: Probable septum site-determining protein MinC (246 aa).

The protein belongs to the MinC family. As to quaternary structure, interacts with MinD and FtsZ.

Its function is as follows. Cell division inhibitor that blocks the formation of polar Z ring septums. Rapidly oscillates between the poles of the cell to destabilize FtsZ filaments that have formed before they mature into polar Z rings. Prevents FtsZ polymerization. This chain is Probable septum site-determining protein MinC, found in Lachnospira eligens (strain ATCC 27750 / DSM 3376 / VPI C15-48 / C15-B4) (Eubacterium eligens).